The sequence spans 279 residues: Putative pyruvate, phosphate dikinase regulatory protein (279 aa).

Position 153 to 160 (153 to 160 (GVSRTSKT)) interacts with ADP.

The protein belongs to the pyruvate, phosphate/water dikinase regulatory protein family. PDRP subfamily.

The catalysed reaction is N(tele)-phospho-L-histidyl/L-threonyl-[pyruvate, phosphate dikinase] + ADP = N(tele)-phospho-L-histidyl/O-phospho-L-threonyl-[pyruvate, phosphate dikinase] + AMP + H(+). The enzyme catalyses N(tele)-phospho-L-histidyl/O-phospho-L-threonyl-[pyruvate, phosphate dikinase] + phosphate + H(+) = N(tele)-phospho-L-histidyl/L-threonyl-[pyruvate, phosphate dikinase] + diphosphate. In terms of biological role, bifunctional serine/threonine kinase and phosphorylase involved in the regulation of the pyruvate, phosphate dikinase (PPDK) by catalyzing its phosphorylation/dephosphorylation. The sequence is that of Putative pyruvate, phosphate dikinase regulatory protein from Rhodopseudomonas palustris (strain BisA53).